A 275-amino-acid polypeptide reads, in one-letter code: N-(5'-phosphoribosyl)anthranilate isomerase 1, chloroplastic (275 aa).

The transit peptide at 1–32 (MSTGISTDLHVHFGALNFSKTYKSGLSNRTVS) directs the protein to the chloroplast.

It belongs to the TrpF family. As to expression, expressed in roots and shoots.

The protein resides in the plastid. The protein localises to the chloroplast. The catalysed reaction is N-(5-phospho-beta-D-ribosyl)anthranilate = 1-(2-carboxyphenylamino)-1-deoxy-D-ribulose 5-phosphate. It participates in amino-acid biosynthesis; L-tryptophan biosynthesis; L-tryptophan from chorismate: step 3/5. Catalyzes the conversion of 5-phosphoribosylanthranilate to l-(O-carboxyphenylamino)-l-deoxyribulose-5-phosphate, which is the third step of the tryptophan biosynthetic pathway. This is N-(5'-phosphoribosyl)anthranilate isomerase 1, chloroplastic (PAI1) from Arabidopsis thaliana (Mouse-ear cress).